A 179-amino-acid chain; its full sequence is Large ribosomal subunit protein uL5 (179 aa).

It belongs to the universal ribosomal protein uL5 family. As to quaternary structure, part of the 50S ribosomal subunit; part of the 5S rRNA/L5/L18/L25 subcomplex. Contacts the 5S rRNA and the P site tRNA. Forms a bridge to the 30S subunit in the 70S ribosome.

This is one of the proteins that bind and probably mediate the attachment of the 5S RNA into the large ribosomal subunit, where it forms part of the central protuberance. In the 70S ribosome it contacts protein S13 of the 30S subunit (bridge B1b), connecting the 2 subunits; this bridge is implicated in subunit movement. Contacts the P site tRNA; the 5S rRNA and some of its associated proteins might help stabilize positioning of ribosome-bound tRNAs. In Cellvibrio japonicus (strain Ueda107) (Pseudomonas fluorescens subsp. cellulosa), this protein is Large ribosomal subunit protein uL5.